The primary structure comprises 290 residues: Ubiquinone biosynthesis protein COQ4, mitochondrial (290 aa).

The transit peptide at 1-32 (MAKRVCVGDLRKLAGSVSTPSRCILPPHARCF) directs the protein to the mitochondrion. Zn(2+) contacts are provided by His-168, Asp-169, His-172, and Glu-184. The interval 260-290 (KPPDLREMRKAEREAQKKDKEAKETMTRAAV) is disordered.

It belongs to the COQ4 family. Component of a multi-subunit COQ enzyme complex, composed of at least COQ3, COQ4, COQ5, COQ6, COQ7 and COQ9. Zn(2+) is required as a cofactor.

It is found in the mitochondrion inner membrane. It carries out the reaction a 4-hydroxy-3-methoxy-5-(all-trans-polyprenyl)benzoate + H(+) = a 2-methoxy-6-(all-trans-polyprenyl)phenol + CO2. The protein operates within cofactor biosynthesis; ubiquinone biosynthesis. Its function is as follows. Lyase that catalyzes the C1-decarboxylation of 4-hydroxy-3-methoxy-5-(all-trans-polyprenyl)benzoic acid into 2-methoxy-6-(all-trans-polyprenyl)phenol during ubiquinone biosynthesis. This is Ubiquinone biosynthesis protein COQ4, mitochondrial from Phaeosphaeria nodorum (strain SN15 / ATCC MYA-4574 / FGSC 10173) (Glume blotch fungus).